Consider the following 395-residue polypeptide: S-adenosylmethionine synthase (395 aa).

Residue E10 coordinates Mg(2+). Residue H16 coordinates ATP. E44 lines the K(+) pocket. E57 and Q100 together coordinate L-methionine. ATP-binding positions include 168-170 (DGK), 236-239 (SGRF), 253-254 (RK), A270, K274, and K278. K278 contributes to the L-methionine binding site.

This sequence belongs to the AdoMet synthase family. Homotetramer. It depends on Mn(2+) as a cofactor. Mg(2+) is required as a cofactor. Requires Co(2+) as cofactor. The cofactor is K(+).

The protein resides in the cytoplasm. It carries out the reaction L-methionine + ATP + H2O = S-adenosyl-L-methionine + phosphate + diphosphate. It functions in the pathway amino-acid biosynthesis; S-adenosyl-L-methionine biosynthesis; S-adenosyl-L-methionine from L-methionine: step 1/1. In terms of biological role, catalyzes the formation of S-adenosylmethionine from methionine and ATP. The reaction comprises two steps that are both catalyzed by the same enzyme: formation of S-adenosylmethionine (AdoMet) and triphosphate, and subsequent hydrolysis of the triphosphate. The chain is S-adenosylmethionine synthase (METK) from Populus deltoides (Eastern poplar).